Reading from the N-terminus, the 198-residue chain is MRQFVIIGHDAPTTPEFSLDDLAGAAGRLDVLCRCVTSAFFLSHAIREDVRVHLILGDEYTVTFEGSDLRRLNPDERSTAALIRKALEEREEAIGHIPVETSPGVSLTRRGFEGTLDDVARRGTVVQLHEDGDPIVGVAPPSDPVFVLSDHHDFRDEEAALLADRADERVSLGPKALHADHSITVAHNYLDTAGFERY.

Leucine 128 lines the S-adenosyl-L-methionine pocket.

The protein belongs to the methyltransferase superfamily. TrmY family. As to quaternary structure, homodimer.

It is found in the cytoplasm. It catalyses the reaction pseudouridine(54) in tRNA + S-adenosyl-L-methionine = N(1)-methylpseudouridine(54) in tRNA + S-adenosyl-L-homocysteine + H(+). Its function is as follows. Specifically catalyzes the N1-methylation of pseudouridine at position 54 (Psi54) in tRNAs. This Haloarcula marismortui (strain ATCC 43049 / DSM 3752 / JCM 8966 / VKM B-1809) (Halobacterium marismortui) protein is tRNA (pseudouridine(54)-N(1))-methyltransferase.